The chain runs to 307 residues: MSERVKVAILGSGNIGTDLMYKLLKNPGHMELVAVVGIDPKSEGLARARALGLEASHEGIAYILERPEIKIVFDATSAKAHVRHAKLLREAGKIAIDLTPAARGPYVVPPVNLKEHLDKDNVNLITCGGQATIPLVYAVHRVAPVLYAEMVSTVASRSAGPGTRQNIDEFTFTTARGLEAIGGAKKGKAIIILNPAEPPILMTNTVRCIPEDEGFDREAVVASVRAMEREVQAYVPGYRLKADPVFERLPTPWGERTVVSMLLEVEGAGDYLPKYAGNLDIMTASARRVGEVFAQHLLGKPVEEVVA.

12–15 (SGNI) lines the NAD(+) pocket. Catalysis depends on cysteine 127, which acts as the Acyl-thioester intermediate. NAD(+) contacts are provided by residues 158 to 166 (SAGPGTRQN) and asparagine 278.

The protein belongs to the acetaldehyde dehydrogenase family. In terms of assembly, monomer. Can also form a heterotetramer composed of two aldolase (TTHB246) and two dehydrogenase (TTHB247) subunits. Upon complex formation, the aldolase shows a 5-fold increase in substrate affinity, while the dehydrogenase shows a 3-fold decrease; the kcat values of each enzyme are reduced by 2-fold when they are in a complex.

The catalysed reaction is acetaldehyde + NAD(+) + CoA = acetyl-CoA + NADH + H(+). It carries out the reaction propanal + NAD(+) + CoA = propanoyl-CoA + NADH + H(+). In terms of biological role, catalyzes the conversion of acetaldehyde or propanal to acetyl-CoA or propanoyl-CoA, respectively, using NAD(+) and coenzyme A. The aldehyde substrates can be directly channeled from the aldolase TTHB246 to the dehydrogenase TTHB247. Is the final enzyme in the meta-cleavage pathway for the degradation of aromatic compounds. The polypeptide is Acetaldehyde dehydrogenase (Thermus thermophilus (strain ATCC 27634 / DSM 579 / HB8)).